A 1038-amino-acid polypeptide reads, in one-letter code: Bone morphogenetic protein receptor type-2 (1038 aa).

A signal peptide spans 1 to 26 (MTSSLQRPWRVPWLPWTILLVSTAAA). Topologically, residues 27 to 150 (SQNQERLCAF…PPHSFNRDET (124 aa)) are extracellular. Intrachain disulfides connect Cys-34–Cys-66, Cys-60–Cys-84, Cys-94–Cys-117, Cys-99–Cys-116, and Cys-118–Cys-123. A glycan (N-linked (GlcNAc...) asparagine) is linked at Asn-55. N-linked (GlcNAc...) asparagine glycosylation occurs at Asn-110. N-linked (GlcNAc...) asparagine glycosylation is present at Asn-126. The helical transmembrane segment at 151–171 (IIIALASVSVLAVLIVALCFG) threads the bilayer. At 172-1038 (YRMLTGDRKQ…VSKDIGMNCL (867 aa)) the chain is on the cytoplasmic side. The region spanning 203–504 (LKLLELIGRG…QCAEERMAEL (302 aa)) is the Protein kinase domain. ATP contacts are provided by residues 209 to 217 (IGRGRYGAV), Lys-230, and 280 to 282 (EYY). Catalysis depends on Asp-333, which acts as the Proton acceptor. ATP-binding positions include 337-338 (RN) and Asp-351. Thr-379 is subject to Phosphothreonine. Ser-586 carries the phosphoserine modification. A disordered region spans residues 593–626 (QAQARIPSPETSVTSLSTNTTTTNTTGLTPSTGM). Over residues 603–626 (TSVTSLSTNTTTTNTTGLTPSTGM) the composition is skewed to low complexity. Ser-680 and Ser-681 each carry phosphoserine. 2 disordered regions span residues 746 to 770 (PKQQNLPKRPTSLPLNTKNSTKEPR) and 872 to 972 (RREQ…EKIK). Residues 872-896 (RREQQAGHDEGVLDRLVDRRERPLE) show a composition bias toward basic and acidic residues. The span at 937–964 (RPNSLDLSATNVLDGSSIQIGESTQDGK) shows a compositional bias: polar residues.

The protein belongs to the protein kinase superfamily. TKL Ser/Thr protein kinase family. TGFB receptor subfamily. As to quaternary structure, interacts with GDF5. Interacts with BMP4. Interacts with SCUBE3. Interacts with TSC22D1/TSC-22. Interacts with activin A/INHBA. The cofactor is Mg(2+). It depends on Mn(2+) as a cofactor. Highly expressed in heart and liver.

It is found in the cell membrane. The catalysed reaction is L-threonyl-[receptor-protein] + ATP = O-phospho-L-threonyl-[receptor-protein] + ADP + H(+). The enzyme catalyses L-seryl-[receptor-protein] + ATP = O-phospho-L-seryl-[receptor-protein] + ADP + H(+). Functionally, on ligand binding, forms a receptor complex consisting of two type II and two type I transmembrane serine/threonine kinases. Type II receptors phosphorylate and activate type I receptors which autophosphorylate, then bind and activate SMAD transcriptional regulators. Can also mediate signaling through the activation of the p38MAPK cascade. Binds to BMP7, BMP2 and, less efficiently, BMP4. Binding is weak but enhanced by the presence of type I receptors for BMPs. Mediates induction of adipogenesis by GDF6. Promotes signaling also by binding to activin A/INHBA. The polypeptide is Bone morphogenetic protein receptor type-2 (BMPR2) (Homo sapiens (Human)).